The primary structure comprises 724 residues: Probable ATP-dependent RNA helicase DDX4 (724 aa).

The segment at 1–246 is disordered; the sequence is MGDEDWEAEI…SDTQGPKVTY (246 aa). The segment covering 30 to 42 has biased composition (polar residues); it reads NGDNFNRTPASSS. The span at 69–78 shows a compositional bias: basic and acidic residues; sequence DAGECNKRDN. Positions 150 to 162 are enriched in gly residues; sequence RGSFRGCRGGFGL. Residues 195–205 are compositionally biased toward low complexity; the sequence is GDTSQSRSGSG. 2 positions are modified to phosphoserine: Ser222 and Ser226. The interaction with RANBP9 stretch occupies residues 228 to 247; sequence KSEAEGGESSDTQGPKVTYI. The Q motif signature appears at 288–316; sequence LTFEEANLCQTLNNNIAKAGYTKLTPVQK. Positions 319-502 constitute a Helicase ATP-binding domain; it reads IPIILAGRDL…AEFLKSNYLF (184 aa). 332 to 339 contacts ATP; sequence AQTGSGKT. The DEAD box signature appears at 446–449; the sequence is DEAD. Positions 530–675 constitute a Helicase C-terminal domain; sequence KLVEILRNIG…DVPAWLEEIA (146 aa). Polar residues predominate over residues 704-715; that stretch reads LNTAGFSSSQAP. Residues 704-724 are disordered; the sequence is LNTAGFSSSQAPNPVDDESWD. Residue Ser722 is modified to Phosphoserine.

Belongs to the DEAD box helicase family. DDX4/VASA subfamily. Found in a mRNP complex, at least composed of TDRD1, TDRD6, TDRD7 and DDX4. Interacts with RANBP9. Interacts with RANBP10. Interacts with PIWIL2 and MAEL. Interacts with BMAL1 and CLOCK. Interacts with Tex19.1 and, probably, Tex19.2. Interacts with RBM46. Expressed only in ovary and testis. Expressed in migratory primordial germ cells in the region of the gonadal ridge in both sexes.

It is found in the cytoplasm. Its subcellular location is the perinuclear region. The enzyme catalyses ATP + H2O = ADP + phosphate + H(+). Its function is as follows. ATP-dependent RNA helicase required during spermatogenesis. Required to repress transposable elements and preventing their mobilization, which is essential for the germline integrity. Acts via the piRNA metabolic process, which mediates the repression of transposable elements during meiosis by forming complexes composed of piRNAs and Piwi proteins and governs the methylation and subsequent repression of transposons. Involved in the secondary piRNAs metabolic process, the production of piRNAs in fetal male germ cells through a ping-pong amplification cycle. Required for PIWIL2 slicing-triggered piRNA biogenesis: helicase activity enables utilization of one of the slice cleavage fragments generated by PIWIL2 and processing these pre-piRNAs into piRNAs. This Homo sapiens (Human) protein is Probable ATP-dependent RNA helicase DDX4 (DDX4).